Reading from the N-terminus, the 392-residue chain is S-adenosylmethionine synthase (392 aa).

Position 15 (H15) interacts with ATP. D17 lines the Mg(2+) pocket. E43 serves as a coordination point for K(+). The L-methionine site is built by E56 and Q99. The interval 99 to 109 is flexible loop; that stretch reads QSKDIAQGVDE. ATP-binding positions include 173–175, 239–240, D248, 254–255, A271, and K275; these read DGK, KF, and RK. Position 248 (D248) interacts with L-methionine. K279 is a binding site for L-methionine.

The protein belongs to the AdoMet synthase family. As to quaternary structure, homotetramer; dimer of dimers. The cofactor is Mg(2+). It depends on K(+) as a cofactor.

The protein localises to the cytoplasm. It carries out the reaction L-methionine + ATP + H2O = S-adenosyl-L-methionine + phosphate + diphosphate. Its pathway is amino-acid biosynthesis; S-adenosyl-L-methionine biosynthesis; S-adenosyl-L-methionine from L-methionine: step 1/1. Its function is as follows. Catalyzes the formation of S-adenosylmethionine (AdoMet) from methionine and ATP. The overall synthetic reaction is composed of two sequential steps, AdoMet formation and the subsequent tripolyphosphate hydrolysis which occurs prior to release of AdoMet from the enzyme. This Finegoldia magna (strain ATCC 29328 / DSM 20472 / WAL 2508) (Peptostreptococcus magnus) protein is S-adenosylmethionine synthase.